We begin with the raw amino-acid sequence, 493 residues long: Galactose-1-phosphate uridylyltransferase (493 aa).

Belongs to the galactose-1-phosphate uridylyltransferase type 2 family.

It is found in the cytoplasm. The enzyme catalyses alpha-D-galactose 1-phosphate + UDP-alpha-D-glucose = alpha-D-glucose 1-phosphate + UDP-alpha-D-galactose. The protein operates within carbohydrate metabolism; galactose metabolism. This chain is Galactose-1-phosphate uridylyltransferase, found in Streptococcus pneumoniae serotype 19F (strain G54).